We begin with the raw amino-acid sequence, 452 residues long: Probable glycine dehydrogenase (decarboxylating) subunit 1 (452 aa).

The protein belongs to the GcvP family. N-terminal subunit subfamily. As to quaternary structure, the glycine cleavage system is composed of four proteins: P, T, L and H. In this organism, the P 'protein' is a heterodimer of two subunits.

The enzyme catalyses N(6)-[(R)-lipoyl]-L-lysyl-[glycine-cleavage complex H protein] + glycine + H(+) = N(6)-[(R)-S(8)-aminomethyldihydrolipoyl]-L-lysyl-[glycine-cleavage complex H protein] + CO2. Functionally, the glycine cleavage system catalyzes the degradation of glycine. The P protein binds the alpha-amino group of glycine through its pyridoxal phosphate cofactor; CO(2) is released and the remaining methylamine moiety is then transferred to the lipoamide cofactor of the H protein. The chain is Probable glycine dehydrogenase (decarboxylating) subunit 1 from Sphingopyxis alaskensis (strain DSM 13593 / LMG 18877 / RB2256) (Sphingomonas alaskensis).